The sequence spans 682 residues: Potassium-transporting ATPase ATP-binding subunit (682 aa).

The next 4 membrane-spanning stretches (helical) occupy residues 34-54, 62-82, 219-239, and 254-274; these read PVMFIVWIGSLLTTCISIAMA, ALFSAAISGWLWVTVLFANFA, IALTILLIALTIVFLLATATL, and VLVALLVCLIPTTIGGLLSAI. Residue Asp307 is the 4-aspartylphosphate intermediate of the active site. Residues Asp344, Glu348, 377 to 384, and Lys395 each bind ATP; that span reads FTAQSRMS. Mg(2+)-binding residues include Asp518 and Asp522. The next 3 helical transmembrane spans lie at 588–608, 616–636, and 656–676; these read FAIIPAAFAATYPQLNALNIM, AILSAVIFNALIIVFLIPLAL, and IYGLGGLLVPFIGIKVIDLLL.

This sequence belongs to the cation transport ATPase (P-type) (TC 3.A.3) family. Type IA subfamily. In terms of assembly, the system is composed of three essential subunits: KdpA, KdpB and KdpC.

The protein resides in the cell inner membrane. The enzyme catalyses K(+)(out) + ATP + H2O = K(+)(in) + ADP + phosphate + H(+). Functionally, part of the high-affinity ATP-driven potassium transport (or Kdp) system, which catalyzes the hydrolysis of ATP coupled with the electrogenic transport of potassium into the cytoplasm. This subunit is responsible for energy coupling to the transport system and for the release of the potassium ions to the cytoplasm. This chain is Potassium-transporting ATPase ATP-binding subunit, found in Escherichia coli O8 (strain IAI1).